The primary structure comprises 61 residues: Photosystem II reaction center protein K (61 aa).

The propeptide occupies 1 to 24 (MLNTFSLIGICLNSTLYSSSFFFG). The helical transmembrane segment at 36-56 (IVDIMPVIPLFFFLLAFVWQA) threads the bilayer.

Belongs to the PsbK family. PSII is composed of 1 copy each of membrane proteins PsbA, PsbB, PsbC, PsbD, PsbE, PsbF, PsbH, PsbI, PsbJ, PsbK, PsbL, PsbM, PsbT, PsbX, PsbY, PsbZ, Psb30/Ycf12, at least 3 peripheral proteins of the oxygen-evolving complex and a large number of cofactors. It forms dimeric complexes.

It localises to the plastid. The protein resides in the chloroplast thylakoid membrane. Functionally, one of the components of the core complex of photosystem II (PSII). PSII is a light-driven water:plastoquinone oxidoreductase that uses light energy to abstract electrons from H(2)O, generating O(2) and a proton gradient subsequently used for ATP formation. It consists of a core antenna complex that captures photons, and an electron transfer chain that converts photonic excitation into a charge separation. The polypeptide is Photosystem II reaction center protein K (Solanum bulbocastanum (Wild potato)).